Consider the following 448-residue polypeptide: Phosphoglucosamine mutase (448 aa).

Ser-100 acts as the Phosphoserine intermediate in catalysis. Residues Ser-100, Asp-240, Asp-242, and Asp-244 each contribute to the Mg(2+) site. A Phosphoserine modification is found at Ser-100.

Belongs to the phosphohexose mutase family. Requires Mg(2+) as cofactor. In terms of processing, activated by phosphorylation.

It catalyses the reaction alpha-D-glucosamine 1-phosphate = D-glucosamine 6-phosphate. Catalyzes the conversion of glucosamine-6-phosphate to glucosamine-1-phosphate. This is Phosphoglucosamine mutase from Clostridium tetani (strain Massachusetts / E88).